Here is a 311-residue protein sequence, read N- to C-terminus: Alpha/beta hydrolase domain-containing protein 17C (311 aa).

A disordered region spans residues 48 to 67 (EAPASTAQQPPREEGSGEPA). Catalysis depends on charge relay system residues serine 193, aspartate 258, and histidine 287.

This sequence belongs to the AB hydrolase superfamily. ABHD17 family. Palmitoylated on cysteine residues located in a cysteine cluster at the N-terminus which promotes membrane localization.

The protein localises to the recycling endosome membrane. Its subcellular location is the cell projection. It is found in the dendritic spine. The protein resides in the postsynaptic density membrane. It catalyses the reaction S-hexadecanoyl-L-cysteinyl-[protein] + H2O = L-cysteinyl-[protein] + hexadecanoate + H(+). Its function is as follows. Hydrolyzes fatty acids from S-acylated cysteine residues in proteins. Has depalmitoylating activity towards NRAS. This Xenopus laevis (African clawed frog) protein is Alpha/beta hydrolase domain-containing protein 17C.